We begin with the raw amino-acid sequence, 284 residues long: Polyamine aminopropyltransferase (284 aa).

Residues 6–242 (KGWFTEVCKE…GWWSATLAGH (237 aa)) enclose the PABS domain. Glutamine 36 serves as a coordination point for S-methyl-5'-thioadenosine. Spermidine contacts are provided by histidine 67 and aspartate 91. S-methyl-5'-thioadenosine contacts are provided by residues glutamate 111 and 142 to 143 (DG). Residue aspartate 161 is the Proton acceptor of the active site. Position 161-164 (161-164 (DSTD)) interacts with spermidine.

The protein belongs to the spermidine/spermine synthase family. Homodimer or homotetramer.

Its subcellular location is the cytoplasm. It catalyses the reaction S-adenosyl 3-(methylsulfanyl)propylamine + putrescine = S-methyl-5'-thioadenosine + spermidine + H(+). It functions in the pathway amine and polyamine biosynthesis; spermidine biosynthesis; spermidine from putrescine: step 1/1. In terms of biological role, catalyzes the irreversible transfer of a propylamine group from the amino donor S-adenosylmethioninamine (decarboxy-AdoMet) to putrescine (1,4-diaminobutane) to yield spermidine. The chain is Polyamine aminopropyltransferase from Nitrosococcus oceani (strain ATCC 19707 / BCRC 17464 / JCM 30415 / NCIMB 11848 / C-107).